Consider the following 297-residue polypeptide: Acetaldehyde dehydrogenase (297 aa).

Thr18 to Ile21 serves as a coordination point for NAD(+). The active-site Acyl-thioester intermediate is the Cys133. Residues Ser165 to Asn173 and Asn275 contribute to the NAD(+) site.

It belongs to the acetaldehyde dehydrogenase family.

The enzyme catalyses acetaldehyde + NAD(+) + CoA = acetyl-CoA + NADH + H(+). The polypeptide is Acetaldehyde dehydrogenase (Spirochaeta aurantia).